The primary structure comprises 420 residues: MSGRPRTTSFAESCKPVQQPSAFGSMKVSRDKDGSKVTTVVATPGQGPDRPQEVSYTDTKVIGNGSFGVVYQAKLCDSGELVAIKKVLQDKRFKNRELQIMRKLDHCNIVRLRYFFYSSGEKKDEVYLNLVLDYVPETVYRVARHYSRAKQTLPVIYVKLYMYQLFRSLAYIHSFGICHRDIKPQNLLLDPDTAVLKLCDFGSAKQLVRGEPNVSYICSRYYRAPELIFGATDYTSSIDMWSAGCVLAELLLGQPIFPGDSGVDQLVEIIKVLGTPTREQIREMNPNYTEFKFPQIKAHPWTKVFRPRTPPEAIALCSRLLEYTPTARLTPLEACAHSFFDELRDPNVKLPNGRDTPALFNFTTQELSSNPPLATILIPPHARIQAAASPPANATAASDTNAGDRGQTNNAASASASNST.

Polar residues predominate over residues 1–22 (MSGRPRTTSFAESCKPVQQPSA). A disordered region spans residues 1 to 53 (MSGRPRTTSFAESCKPVQQPSAFGSMKVSRDKDGSKVTTVVATPGQGPDRPQE). At Ser9 the chain carries Phosphoserine; by PKB/AKT1, RPS6KA3 and SGK3. Cys14 carries the S-palmitoyl cysteine lipid modification. Residues 56–340 (YTDTKVIGNG…PLEACAHSFF (285 aa)) enclose the Protein kinase domain. ATP is bound by residues 62–70 (IGNGSFGVV) and Lys85. The active-site Proton acceptor is the Asp181. Residue Tyr216 is modified to Phosphotyrosine. The segment at 385 to 420 (QAAASPPANATAASDTNAGDRGQTNNAASASASNST) is disordered. Low complexity-rich tracts occupy residues 386-401 (AAAS…SDTN) and 409-420 (NNAASASASNST). Ser389 bears the Phosphoserine mark.

It belongs to the protein kinase superfamily. CMGC Ser/Thr protein kinase family. GSK-3 subfamily. As to quaternary structure, monomer. Interacts with DAB2IP (via C2 domain); the interaction stimulates GSK3B kinase activation. Interacts (via C2 domain) with PPP2CA. Interacts with ARRB2, AXIN1, CABYR, DISC1, MMP2, MUC1, NIN, PRUNE1 and ZBED3. Interacts with AXIN1; the interaction mediates hyperphosphorylation of CTNNB1 leading to its ubiquitination and destruction. Interacts with and phosphorylates SNAI1. Interacts with DNM1L (via a C-terminal domain). Found in a complex composed of MACF1, APC, AXIN1, CTNNB1 and GSK3B. Interacts with SGK3. Interacts with the CLOCK-BMAL1 heterodimer. Interacts with the BMAL1. Interacts with CTNND2. The complex composed, at least, of APC, CTNNB1 and GSK3B interacts with JPT1; the interaction requires the inactive form of GSK3B (phosphorylated at 'Ser-9'). Forms a complex composed of PRKAR2A or PRKAR2B, GSK3B and GSKIP through GSKIP interaction; facilitates PKA-induced phosphorylation and regulates GSK3B activity. Interacts with GSKIP. Interacts with GID8. Interacts with PIWIL2. Interacts with LMBR1L. Interacts with DDX3X. Interacts with BIRC2. Interacts with TNFRSF10B; TNFRSF10B stimulation inhibits GSK3B kinase activity. Found in a complex with SLC39A6, SLC39A10 and with GSK3B that controls NCAM1 phosphorylation. Interacts with PKP3 (via ARM repeats); the interaction may be involved in PKP3 protein degradation. In terms of processing, phosphorylated by AKT1 and ILK1. Upon insulin-mediated signaling, the activated PKB/AKT1 and RPS6KA3 protein kinases phosphorylate and deactivate GSK3B, resulting in the dephosphorylation and activation of GYS1. Activated by phosphorylation at Tyr-216. Inactivated by phosphorylation at Ser-9. Phosphorylated in a circadian manner in the hippocampus. Mono-ADP-ribosylation by PARP10 negatively regulates kinase activity. Post-translationally, palmitoylated. Palmitoylation by ZDHHC4 prevents AKT1-mediated phosphorylation.

The protein resides in the cytoplasm. It localises to the nucleus. It is found in the membrane. The protein localises to the cell membrane. It catalyses the reaction L-seryl-[tau protein] + ATP = O-phospho-L-seryl-[tau protein] + ADP + H(+). It carries out the reaction L-threonyl-[tau protein] + ATP = O-phospho-L-threonyl-[tau protein] + ADP + H(+). The enzyme catalyses L-seryl-[protein] + ATP = O-phospho-L-seryl-[protein] + ADP + H(+). The catalysed reaction is L-threonyl-[protein] + ATP = O-phospho-L-threonyl-[protein] + ADP + H(+). Its activity is regulated as follows. Activated by phosphorylation at Tyr-216. In response to insulin, inhibited by phosphorylation at Ser-9 by PKB/AKT1; phosphorylation at this site causes a conformational change, preventing access of substrates to the active site. Inhibited by IL22 treatment which also triggers phosphorylation at Ser-9, promoting inactivation. Inhibited by lithium. Its function is as follows. Constitutively active protein kinase that acts as a negative regulator in the hormonal control of glucose homeostasis, Wnt signaling and regulation of transcription factors and microtubules, by phosphorylating and inactivating glycogen synthase (GYS1 or GYS2), EIF2B, CTNNB1/beta-catenin, APC, AXIN1, DPYSL2/CRMP2, JUN, NFATC1/NFATC, MAPT/TAU and MACF1. Requires primed phosphorylation of the majority of its substrates. In skeletal muscle, contributes to insulin regulation of glycogen synthesis by phosphorylating and inhibiting GYS1 activity and hence glycogen synthesis. May also mediate the development of insulin resistance by regulating activation of transcription factors. Regulates protein synthesis by controlling the activity of initiation factor 2B (EIF2BE/EIF2B5) in the same manner as glycogen synthase. In Wnt signaling, GSK3B forms a multimeric complex with APC, AXIN1 and CTNNB1/beta-catenin and phosphorylates the N-terminus of CTNNB1 leading to its degradation mediated by ubiquitin/proteasomes. Phosphorylates JUN at sites proximal to its DNA-binding domain, thereby reducing its affinity for DNA. Phosphorylates NFATC1/NFATC on conserved serine residues promoting NFATC1/NFATC nuclear export, shutting off NFATC1/NFATC gene regulation, and thereby opposing the action of calcineurin. Phosphorylates MAPT/TAU on 'Thr-548', decreasing significantly MAPT/TAU ability to bind and stabilize microtubules. MAPT/TAU is the principal component of neurofibrillary tangles in Alzheimer disease. Plays an important role in ERBB2-dependent stabilization of microtubules at the cell cortex. Phosphorylates MACF1, inhibiting its binding to microtubules which is critical for its role in bulge stem cell migration and skin wound repair. Probably regulates NF-kappa-B (NFKB1) at the transcriptional level and is required for the NF-kappa-B-mediated anti-apoptotic response to TNF-alpha (TNF/TNFA). Negatively regulates replication in pancreatic beta-cells, resulting in apoptosis, loss of beta-cells and diabetes. Through phosphorylation of the anti-apoptotic protein MCL1, may control cell apoptosis in response to growth factors deprivation. Phosphorylates MUC1 in breast cancer cells, decreasing the interaction of MUC1 with CTNNB1/beta-catenin. Is necessary for the establishment of neuronal polarity and axon outgrowth. Phosphorylates MARK2, leading to inhibition of its activity. Phosphorylates SIK1 at 'Thr-182', leading to sustainment of its activity. Phosphorylates ZC3HAV1 which enhances its antiviral activity. Phosphorylates SNAI1, leading to its ubiquitination and proteasomal degradation. Phosphorylates SFPQ at 'Thr-687' upon T-cell activation. Phosphorylates NR1D1 st 'Ser-55' and 'Ser-59' and stabilizes it by protecting it from proteasomal degradation. Regulates the circadian clock via phosphorylation of the major clock components including BMAL1, CLOCK and PER2. Phosphorylates CLOCK AT 'Ser-427' and targets it for proteasomal degradation. Phosphorylates BMAL1 at 'Ser-17' and 'Ser-21' and primes it for ubiquitination and proteasomal degradation. Phosphorylates FBXL2 at 'Thr-404' and primes it for ubiquitination by the SCF(FBXO3) complex and proteasomal degradation. Phosphorylates OGT at 'Ser-3' or 'Ser-4' which positively regulates its activity. Phosphorylates MYCN in neuroblastoma cells which may promote its degradation. Regulates the circadian rhythmicity of hippocampal long-term potentiation and BMAL1 and PER2 expression. Acts as a regulator of autophagy by mediating phosphorylation of KAT5/TIP60 under starvation conditions, activating KAT5/TIP60 acetyltransferase activity and promoting acetylation of key autophagy regulators, such as ULK1 and RUBCNL/Pacer. Negatively regulates extrinsic apoptotic signaling pathway via death domain receptors. Promotes the formation of an anti-apoptotic complex, made of DDX3X, BRIC2 and GSK3B, at death receptors, including TNFRSF10B. The anti-apoptotic function is most effective with weak apoptotic signals and can be overcome by stronger stimulation. Phosphorylates E2F1, promoting the interaction between E2F1 and USP11, stabilizing E2F1 and promoting its activity. Phosphorylates mTORC2 complex component RICTOR at 'Ser-1235' in response to endoplasmic stress, inhibiting mTORC2. Phosphorylates FXR1, promoting FXR1 ubiquitination by the SCF(FBXO4) complex and FXR1 degradation by the proteasome. Phosphorylates interleukin-22 receptor subunit IL22RA1, preventing its proteasomal degradation. This is Glycogen synthase kinase-3 beta from Rattus norvegicus (Rat).